A 908-amino-acid chain; its full sequence is Protein translocase subunit SecA (908 aa).

ATP is bound by residues Q87, 105-109 (GEGKT), and D512. Positions 865-908 (GGDDGSDEMMAHTPMIRDGDKVGRNDPCPCGSGRKYKQCHGKLS) are disordered. The segment covering 879–888 (MIRDGDKVGR) has biased composition (basic and acidic residues). C892, C894, C903, and H904 together coordinate Zn(2+). The span at 898–908 (RKYKQCHGKLS) shows a compositional bias: basic residues.

It belongs to the SecA family. In terms of assembly, monomer and homodimer. Part of the essential Sec protein translocation apparatus which comprises SecA, SecYEG and auxiliary proteins SecDF-YajC and YidC. Zn(2+) serves as cofactor.

The protein resides in the cell inner membrane. It localises to the cytoplasm. The enzyme catalyses ATP + H2O + cellular proteinSide 1 = ADP + phosphate + cellular proteinSide 2.. Functionally, part of the Sec protein translocase complex. Interacts with the SecYEG preprotein conducting channel. Has a central role in coupling the hydrolysis of ATP to the transfer of proteins into and across the cell membrane, serving both as a receptor for the preprotein-SecB complex and as an ATP-driven molecular motor driving the stepwise translocation of polypeptide chains across the membrane. In Shewanella sp. (strain MR-4), this protein is Protein translocase subunit SecA.